The chain runs to 1396 residues: G2/mitotic-specific cyclin-B3 (1396 aa).

3 disordered regions span residues 1–64 (MPPP…TNAS), 259–398 (KEKP…PQME), and 477–500 (TTEK…PGEL). Over residues 10 to 34 (SKLETEKAQSNKITPREEQQSEKIG) the composition is skewed to basic and acidic residues. The short motif at 54–62 (RSVFEDVTN) is the D-box element. Residues 264 to 273 (VKKPHFRKKK) show a composition bias toward basic residues. A compositionally biased stretch (polar residues) spans 306-315 (LQENTNNKDA). S703 carries the phosphoserine modification. The tract at residues 775–796 (VDEPLSHQSPHIQNHSDTTKEA) is disordered. The span at 780–790 (SHQSPHIQNHS) shows a compositional bias: polar residues.

It belongs to the cyclin family. Cyclin AB subfamily. As to quaternary structure, interacts with CDK2 kinase. Ubiquitinated. Ubiquitination leads to its degradation during anaphase entry, after degradation of CCNB1. As to expression, expressed in testis. Also expressed in the fetal ovary, but not in the adult.

The protein resides in the nucleus. In terms of biological role, cyclins are positive regulatory subunits of the cyclin-dependent kinases (CDKs), and thereby play an essential role in the control of the cell cycle, notably via their destruction during cell division. Its tissue specificity suggest that it may be required during early meiotic prophase I. The chain is G2/mitotic-specific cyclin-B3 (Ccnb3) from Mus musculus (Mouse).